We begin with the raw amino-acid sequence, 221 residues long: Veficolin-1 (221 aa).

The N-terminal stretch at 1-25 (MTAWLDFPLALSPLVVVSMKGGSFG) is a signal peptide. Residues 50 to 104 (QGQAGIPGIPGVPGTNGLPGAKGDLGPQGPPGERGSTGIPGKAGPKGDKGDQGEA) form the Collagen-like domain. The tract at residues 54–104 (GIPGIPGVPGTNGLPGAKGDLGPQGPPGERGSTGIPGKAGPKGDKGDQGEA) is disordered. Residues 111–221 (QQQEAGAKDC…DFNNSKTFAK (111 aa)) form the Fibrinogen C-terminal domain. Cys-120 and Cys-148 are joined by a disulfide.

It belongs to the ficolin lectin family. Veficolin subfamily. As to expression, expressed by the mandibular venom duct.

It localises to the secreted. In terms of biological role, initiates complement activation and/or interferes in platelet aggregation and/or blood coagulation. The polypeptide is Veficolin-1 (Varanus komodoensis (Komodo dragon)).